The primary structure comprises 117 residues: Large ribosomal subunit protein uL18 (117 aa).

It belongs to the universal ribosomal protein uL18 family. Part of the 50S ribosomal subunit; part of the 5S rRNA/L5/L18/L25 subcomplex. Contacts the 5S and 23S rRNAs.

In terms of biological role, this is one of the proteins that bind and probably mediate the attachment of the 5S RNA into the large ribosomal subunit, where it forms part of the central protuberance. In Neisseria gonorrhoeae (strain ATCC 700825 / FA 1090), this protein is Large ribosomal subunit protein uL18.